The primary structure comprises 395 residues: Yellow-related salivary protein M35 (395 aa).

A signal peptide spans 1–18 (MKLILTVLAFLSLQVALS).

Belongs to the major royal jelly protein family. In terms of tissue distribution, salivary gland (at protein level).

It localises to the secreted. Probably modulates blood feeding of sand flies on vertebrate species by binding and sequestering different mediators involved in the host response. Functions as a chemoattractant for host neutrophils; likely acts through a G-protein-coupled receptor and effect is dependent on calcium influx and phosphatidylinositol 3-kinases (PI3K) activity. Functionally, (Microbial infection) Probably enhances infection caused by Leishmania species in the host through augmentation of host neutrophil recruitment into the skin. The sequence is that of Yellow-related salivary protein M35 from Phlebotomus duboscqi (Sandfly).